The sequence spans 549 residues: Undecaprenyl phosphate-alpha-4-amino-4-deoxy-L-arabinose arabinosyl transferase (549 aa).

12 helical membrane passes run 9–29 (LLLIAFGLFYLVPLSNHGLWI), 80–100 (LFGVRIASVVATALSVLLAYL), 112–132 (SLACALLYASFGLIAGQSGYA), 136–156 (PQFTFWVNLSLVALWHALDAG), 176–196 (FLTKGFLAWLLPVLVALPYML), 204–224 (LLGYGALAVLAALLVCLPWAL), 256–276 (PWWFYLPLLAVACLPWSGLLP), 288–308 (QAPVVFLALWLLLPLAFFSLS), 312–332 (LPTYIMPCLLPLALLMGHALV), 346–366 (NGLLNLGLALLALAALAYLQL), 376–396 (FELFLVLLVIGAWAAAGLAQW), and 402–422 (AWAAPLLASWVLIALLPAAMP).

This sequence belongs to the glycosyltransferase 83 family.

Its subcellular location is the cell inner membrane. The catalysed reaction is 4-amino-4-deoxy-alpha-L-arabinopyranosyl di-trans,octa-cis-undecaprenyl phosphate + lipid IVA = lipid IIA + di-trans,octa-cis-undecaprenyl phosphate.. Its pathway is lipopolysaccharide metabolism; 4-amino-4-deoxy-beta-L-arabinose-lipid A biosynthesis. Functionally, catalyzes the transfer of the L-Ara4N moiety of the glycolipid undecaprenyl phosphate-alpha-L-Ara4N to lipid A. The modified arabinose is attached to lipid A and is required for resistance to polymyxin and cationic antimicrobial peptides. The chain is Undecaprenyl phosphate-alpha-4-amino-4-deoxy-L-arabinose arabinosyl transferase from Pseudomonas aeruginosa (strain ATCC 15692 / DSM 22644 / CIP 104116 / JCM 14847 / LMG 12228 / 1C / PRS 101 / PAO1).